We begin with the raw amino-acid sequence, 1413 residues long: DNA-directed RNA polymerase subunit beta' (1413 aa).

Residues C70, C72, C85, and C88 each contribute to the Zn(2+) site. Mg(2+) is bound by residues D461, D463, and D465. Residues C820, C894, C901, and C904 each contribute to the Zn(2+) site.

Belongs to the RNA polymerase beta' chain family. As to quaternary structure, the RNAP catalytic core consists of 2 alpha, 1 beta, 1 beta' and 1 omega subunit. When a sigma factor is associated with the core the holoenzyme is formed, which can initiate transcription. It depends on Mg(2+) as a cofactor. Requires Zn(2+) as cofactor.

The enzyme catalyses RNA(n) + a ribonucleoside 5'-triphosphate = RNA(n+1) + diphosphate. DNA-dependent RNA polymerase catalyzes the transcription of DNA into RNA using the four ribonucleoside triphosphates as substrates. The protein is DNA-directed RNA polymerase subunit beta' of Cupriavidus metallidurans (strain ATCC 43123 / DSM 2839 / NBRC 102507 / CH34) (Ralstonia metallidurans).